The sequence spans 2410 residues: Coprinoferrin synthetase (2410 aa).

An adenylation 1 region spans residues L237–R646. Residues R783–T860 form the Carrier 1 domain. S820 is modified (O-(pantetheine 4'-phosphoryl)serine). Residues D891–D1260 form a condensation 1 region. A disordered region spans residues E1298–E1317. Residues R1305–N1314 show a composition bias toward basic and acidic residues. Residues L1324–K1400 enclose the Carrier 2 domain. The residue at position 1361 (S1361) is an O-(pantetheine 4'-phosphoryl)serine. Positions I1436–S1839 are condensation 2. A Carrier 3 domain is found at V1858–K1932. S1893 carries the O-(pantetheine 4'-phosphoryl)serine modification. Residues F1992–V2315 form a condensation 3 region.

This sequence belongs to the NRP synthetase family.

The protein operates within siderophore biosynthesis. In terms of biological role, nonribosomal peptide synthase; part of the gene cluster that mediates the biosynthesis of coprinoferrin, an acylated tripeptide hydroxamate siderophore. The biosynthesis of coprinoferrin depends on the hydroxylation of ornithine to N(5)-hydroxyornithine, catalyzed by the monooxygenase cpf2. The second step, the acylation of N(5)-hydroxy-L-ornithine to yield N(5)-hexanoyl-N(5)-hydroxyl-L-ornithine is catalyzed by a not yet identified acyltransferase. Finally, assembly of coprinoferrin is catalyzed by the nonribosomal peptide synthase (NRPS) cpf1 via amide bond formation between three N(5)-hexanoyl-N(5)-hydroxyl-L-ornithine molecules to release the linear trimer. Interestingly, proteins seemingly not directly related to biosynthesis, such as transcription factors, replication factors, and autophagy-related proteins, are conserved among the clusters homologous to the coprinoferrin cluster, suggesting that the cluster may also play developmental and cell biological functions. The sequence is that of Coprinoferrin synthetase from Coprinopsis cinerea (strain Okayama-7 / 130 / ATCC MYA-4618 / FGSC 9003) (Inky cap fungus).